Consider the following 637-residue polypeptide: MAHYNFKKITVVPSAKDFIDLTLSKTQRKTPTVIHKHYQIHRIRHFYMRKVKFTQQNYHDRLSQILSDFPKLDDIHPFYADLMNILYDKDHYKLALGQINIAKNLVDNVAKDYVRLMKYGDSLYRCKQLKRAALGRMCTIIKRQRQSLEYLEQVRQHLSRLPTIDPNTRTLLLCGYPNVGKSSFINKVTRADVDVQPYAFTTKSLFVGHVDYKYLRWQVVDTPGILDHPLEDRNTIEMQAITALAHLRAAVLYVMDLSEQCGHGLKEQLGLFQNIRPLFINKPLIVVASKCEVKRIAELSEEDQKIFLDLQAEGFPVIETSTLTEEGVIQVKTEACDRLLAHRVETKMKGNKVNEVLNRLHLAVPNKRDDKERPPFIPEGVVARRKRMEIAEPKKKRERDLELEMGDDYILDLQKYWDLMNSSEKYDKIPEIWEGHNAADYIDPAIMKKLEELEKGKKSSEQLLGSMPVSLRVKTRKWWKIRQLAKQIREKKKLKILQSKEKNTQGPRMPRTAKKVQRADLENEMRSLGVDMDDKDNAHYAVRARRSRSVTRKRKREESVPPSSIARSRSRSCSKTPRDVSGLRDVKMVKKAKTMMKKAQKKMNRLGKKGEADRHVFDMKPKHLLSGKRKAGKKERR.

Ala2 carries the post-translational modification N-acetylalanine. Lys103 carries the post-translational modification N6-acetyllysine; alternate. Residue Lys103 forms a Glycyl lysine isopeptide (Lys-Gly) (interchain with G-Cter in SUMO2); alternate linkage. Residue Ser122 is modified to Phosphoserine. One can recognise an OBG-type G domain in the interval 169 to 340; sequence RTLLLCGYPN…VKTEACDRLL (172 aa). GTP is bound by residues 175 to 182, 221 to 225, and 289 to 292; these read GYPNVGKS, DTPGI, and SKCE. Lys332 participates in a covalent cross-link: Glycyl lysine isopeptide (Lys-Gly) (interchain with G-Cter in SUMO2). 2 disordered regions span residues 499 to 518 and 525 to 637; these read SKEK…KVQR and MRSL…KERR. Residue Lys535 forms a Glycyl lysine isopeptide (Lys-Gly) (interchain with G-Cter in SUMO2) linkage. Residues 542–555 are compositionally biased toward basic residues; that stretch reads VRARRSRSVTRKRK. At Ser559 the chain carries Phosphoserine. Positions 563–574 are enriched in low complexity; the sequence is SSIARSRSRSCS. Over residues 576 to 588 the composition is skewed to basic and acidic residues; sequence TPRDVSGLRDVKM. Positions 589-607 are enriched in basic residues; sequence VKKAKTMMKKAQKKMNRLG. The segment covering 608 to 621 has biased composition (basic and acidic residues); that stretch reads KKGEADRHVFDMKP. Residues 622 to 637 show a composition bias toward basic residues; that stretch reads KHLLSGKRKAGKKERR.

Belongs to the TRAFAC class OBG-HflX-like GTPase superfamily. OBG GTPase family. NOG subfamily. Associates with pre-60S ribosomal particles. Interacts with MINAS-60 (product of an alternative open reading frame of RBM10).

The protein resides in the nucleus. It localises to the nucleolus. Involved in the biogenesis of the 60S ribosomal subunit. Acts as TP53 repressor, preventing TP53 stabilization and cell cycle arrest. In Rattus norvegicus (Rat), this protein is GTP-binding protein 4 (Gtpbp4).